Reading from the N-terminus, the 499-residue chain is Bifunctional NAD(P)H-hydrate repair enzyme Nnr (499 aa).

The NAD(P)H-hydrate epimerase stretch occupies residues 1–217 (MFITSKEMRR…PEIAERICGP (217 aa)). Residues 8-213 (MRRIELNSRW…NAGIPEIAER (206 aa)) form the YjeF N-terminal domain. Residues 54–58 (GNGGD) are NADPHX 1; for epimerase activity. N55 and D124 together coordinate K(+). Residues 128–134 (GFGIRGR) form an NADPHX 1; for epimerase activity region. Residue D160 coordinates (6S)-NADPHX. T163 contributes to the K(+) binding site. Positions 217 to 485 (PGDLITSDIW…EYVPKVLRNP (269 aa)) constitute a YjeF C-terminal domain. Residues 217–499 (PGDLITSDIW…PEAVTEVRRD (283 aa)) form an ADP-dependent (S)-NAD(P)H-hydrate dehydratase region. G314 is a (6S)-NADPHX binding site. An NADPHX 2; for dehydratase activity region spans residues 360-366 (HAGEFRR). ADP is bound by residues 397–401 (KGRVD) and 417–426 (TPAMTVGGTG). D427 is a binding site for (6S)-NADPHX.

It in the N-terminal section; belongs to the NnrE/AIBP family. In the C-terminal section; belongs to the NnrD/CARKD family. Requires K(+) as cofactor.

It carries out the reaction (6S)-NADHX + ADP = AMP + phosphate + NADH + H(+). It catalyses the reaction (6S)-NADPHX + ADP = AMP + phosphate + NADPH + H(+). The catalysed reaction is (6R)-NADHX = (6S)-NADHX. The enzyme catalyses (6R)-NADPHX = (6S)-NADPHX. Its function is as follows. Bifunctional enzyme that catalyzes the epimerization of the S- and R-forms of NAD(P)HX and the dehydration of the S-form of NAD(P)HX at the expense of ADP, which is converted to AMP. This allows the repair of both epimers of NAD(P)HX, a damaged form of NAD(P)H that is a result of enzymatic or heat-dependent hydration. The protein is Bifunctional NAD(P)H-hydrate repair enzyme Nnr (nnr) of Methanopyrus kandleri (strain AV19 / DSM 6324 / JCM 9639 / NBRC 100938).